The primary structure comprises 246 residues: Probable transcriptional regulatory protein HD_0596 (246 aa).

It belongs to the TACO1 family.

It localises to the cytoplasm. This is Probable transcriptional regulatory protein HD_0596 from Haemophilus ducreyi (strain 35000HP / ATCC 700724).